The primary structure comprises 200 residues: NAD(P)H dehydrogenase (quinone) (200 aa).

Residues L4–V191 form the Flavodoxin-like domain. Residues S10–V15 and T79–F81 contribute to the FMN site. Y12 is an NAD(+) binding site. Substrate is bound at residue W99. FMN contacts are provided by residues S114–G120 and H135.

The protein belongs to the WrbA family. FMN serves as cofactor.

It catalyses the reaction a quinone + NADH + H(+) = a quinol + NAD(+). The catalysed reaction is a quinone + NADPH + H(+) = a quinol + NADP(+). The polypeptide is NAD(P)H dehydrogenase (quinone) (Nitrosococcus oceani (strain ATCC 19707 / BCRC 17464 / JCM 30415 / NCIMB 11848 / C-107)).